Reading from the N-terminus, the 686-residue chain is Translation initiation factor IF-2 (686 aa).

The tract at residues 54 to 105 (KPSVADEFEVEEKVVRSKKNSNKKKKKGKGNEDKRQENFAGRQQTQTVETPD) is disordered. Residues 69–81 (RSKKNSNKKKKKG) show a composition bias toward basic residues. The 170-residue stretch at 188-357 (ERPAVVTIMG…LLVSEVEEYK (170 aa)) folds into the tr-type G domain. The G1 stretch occupies residues 197-204 (GHVDHGKT). Residue 197–204 (GHVDHGKT) coordinates GTP. The G2 stretch occupies residues 222 to 226 (GITQH). The tract at residues 243–246 (DTPG) is G3. Residues 243–247 (DTPGH) and 297–300 (NKMD) each bind GTP. The interval 297–300 (NKMD) is G4. The G5 stretch occupies residues 333–335 (SAI).

The protein belongs to the TRAFAC class translation factor GTPase superfamily. Classic translation factor GTPase family. IF-2 subfamily.

The protein localises to the cytoplasm. One of the essential components for the initiation of protein synthesis. Protects formylmethionyl-tRNA from spontaneous hydrolysis and promotes its binding to the 30S ribosomal subunits. Also involved in the hydrolysis of GTP during the formation of the 70S ribosomal complex. This is Translation initiation factor IF-2 from Bacillus cereus (strain AH187).